The primary structure comprises 163 residues: uncharacterized protein (163 aa).

The next 2 membrane-spanning stretches (helical) occupy residues 7-27 and 51-71; these read YLNEIWLIIGIICILVECYIV and LVIFTLTNQITFFGLFSLVWF.

The protein resides in the cell membrane. This is an uncharacterized protein from Rickettsia prowazekii (strain Madrid E).